We begin with the raw amino-acid sequence, 156 residues long: Small ribosomal subunit protein uS7 (156 aa).

It belongs to the universal ribosomal protein uS7 family. Part of the 30S ribosomal subunit. Contacts proteins S9 and S11.

In terms of biological role, one of the primary rRNA binding proteins, it binds directly to 16S rRNA where it nucleates assembly of the head domain of the 30S subunit. Is located at the subunit interface close to the decoding center, probably blocks exit of the E-site tRNA. The chain is Small ribosomal subunit protein uS7 from Methylobacterium nodulans (strain LMG 21967 / CNCM I-2342 / ORS 2060).